We begin with the raw amino-acid sequence, 353 residues long: Photosystem II protein D1 (353 aa).

T2 is subject to N-acetylthreonine. The residue at position 2 (T2) is a Phosphothreonine. The next 3 helical transmembrane spans lie at 29-46 (YIGW…TATS), 118-133 (HFLL…EWEL), and 142-156 (WIAV…AATA). Residue H118 participates in chlorophyll a binding. Y126 is a pheophytin a binding site. [CaMn4O5] cluster is bound by residues D170 and E189. A helical membrane pass occupies residues 197 to 218 (FHMLGVAGVFGGSLFSAMHGSL). A chlorophyll a-binding site is contributed by H198. A quinone contacts are provided by residues H215 and 264 to 265 (SF). Fe cation is bound at residue H215. H272 contributes to the Fe cation binding site. Residues 274 to 288 (FLAAWPVVGIWFTAL) traverse the membrane as a helical segment. [CaMn4O5] cluster-binding residues include H332, E333, D342, and A344. Positions 345-353 (AVEVPSTNG) are excised as a propeptide.

This sequence belongs to the reaction center PufL/M/PsbA/D family. PSII is composed of 1 copy each of membrane proteins PsbA, PsbB, PsbC, PsbD, PsbE, PsbF, PsbH, PsbI, PsbJ, PsbK, PsbL, PsbM, PsbT, PsbX, PsbY, PsbZ, Psb30/Ycf12, at least 3 peripheral proteins of the oxygen-evolving complex and a large number of cofactors. It forms dimeric complexes. The D1/D2 heterodimer binds P680, chlorophylls that are the primary electron donor of PSII, and subsequent electron acceptors. It shares a non-heme iron and each subunit binds pheophytin, quinone, additional chlorophylls, carotenoids and lipids. D1 provides most of the ligands for the Mn4-Ca-O5 cluster of the oxygen-evolving complex (OEC). There is also a Cl(-1) ion associated with D1 and D2, which is required for oxygen evolution. The PSII complex binds additional chlorophylls, carotenoids and specific lipids. is required as a cofactor. Post-translationally, tyr-161 forms a radical intermediate that is referred to as redox-active TyrZ, YZ or Y-Z. In terms of processing, C-terminally processed by CTPA; processing is essential to allow assembly of the oxygen-evolving complex and thus photosynthetic growth.

The protein resides in the plastid. Its subcellular location is the chloroplast thylakoid membrane. It carries out the reaction 2 a plastoquinone + 4 hnu + 2 H2O = 2 a plastoquinol + O2. In terms of biological role, photosystem II (PSII) is a light-driven water:plastoquinone oxidoreductase that uses light energy to abstract electrons from H(2)O, generating O(2) and a proton gradient subsequently used for ATP formation. It consists of a core antenna complex that captures photons, and an electron transfer chain that converts photonic excitation into a charge separation. The D1/D2 (PsbA/PsbD) reaction center heterodimer binds P680, the primary electron donor of PSII as well as several subsequent electron acceptors. This is Photosystem II protein D1 from Eucalyptus globulus subsp. globulus (Tasmanian blue gum).